We begin with the raw amino-acid sequence, 657 residues long: Wall-associated receptor kinase-like 20 (657 aa).

An N-terminal signal peptide occupies residues 1 to 23; it reads MEKKRSYYALLIPTLLTVWLACA. Residues 24–293 are Extracellular-facing; the sequence is GHSCARHAKA…KHCKKKKKTV (270 aa). N140 carries an N-linked (GlcNAc...) asparagine glycan. Residues 294 to 314 form a helical membrane-spanning segment; sequence VFAGAAVAVVGVTLAIAVAVI. Residues 315–657 lie on the Cytoplasmic side of the membrane; the sequence is GTKHSHQKVK…NILSQEVTET (343 aa). Residues 363–646 form the Protein kinase domain; that stretch reads FSKDNLIGTG…KEVADEIEYI (284 aa). ATP-binding positions include 369–377 and K391; that span reads IGTGGFGEV. D490 serves as the catalytic Proton acceptor.

It belongs to the protein kinase superfamily. Ser/Thr protein kinase family.

It is found in the membrane. It catalyses the reaction L-seryl-[protein] + ATP = O-phospho-L-seryl-[protein] + ADP + H(+). It carries out the reaction L-threonyl-[protein] + ATP = O-phospho-L-threonyl-[protein] + ADP + H(+). Its function is as follows. Serine/threonine-protein kinase that may function as a signaling receptor of extracellular matrix component. In Arabidopsis thaliana (Mouse-ear cress), this protein is Wall-associated receptor kinase-like 20 (WAKL20).